We begin with the raw amino-acid sequence, 295 residues long: Bifunctional protein FolD (295 aa).

Residues 166–168 (GRS), Ser195, and Ile236 each bind NADP(+).

It belongs to the tetrahydrofolate dehydrogenase/cyclohydrolase family. Homodimer.

The enzyme catalyses (6R)-5,10-methylene-5,6,7,8-tetrahydrofolate + NADP(+) = (6R)-5,10-methenyltetrahydrofolate + NADPH. It carries out the reaction (6R)-5,10-methenyltetrahydrofolate + H2O = (6R)-10-formyltetrahydrofolate + H(+). The protein operates within one-carbon metabolism; tetrahydrofolate interconversion. In terms of biological role, catalyzes the oxidation of 5,10-methylenetetrahydrofolate to 5,10-methenyltetrahydrofolate and then the hydrolysis of 5,10-methenyltetrahydrofolate to 10-formyltetrahydrofolate. This is Bifunctional protein FolD from Prosthecochloris aestuarii (strain DSM 271 / SK 413).